The following is a 434-amino-acid chain: D-amino acid dehydrogenase (434 aa).

Residue 3 to 17 (VVILGSGVVGVTSAW) coordinates FAD.

Belongs to the DadA oxidoreductase family. The cofactor is FAD.

It carries out the reaction a D-alpha-amino acid + A + H2O = a 2-oxocarboxylate + AH2 + NH4(+). It participates in amino-acid degradation; D-alanine degradation; NH(3) and pyruvate from D-alanine: step 1/1. Its function is as follows. Oxidative deamination of D-amino acids. The chain is D-amino acid dehydrogenase from Yersinia pseudotuberculosis serotype O:3 (strain YPIII).